Consider the following 149-residue polypeptide: Transcriptional repressor NrdR (149 aa).

The segment at 3–34 is a zinc-finger region; that stretch reads CPFCSHSETQVVETRISEDGDSIRRRRQCASC. Residues 49–139 form the ATP-cone domain; the sequence is PAIVKKDGRR…VYRSFEDIDE (91 aa).

The protein belongs to the NrdR family. Zn(2+) is required as a cofactor.

Negatively regulates transcription of bacterial ribonucleotide reductase nrd genes and operons by binding to NrdR-boxes. The protein is Transcriptional repressor NrdR of Albidiferax ferrireducens (strain ATCC BAA-621 / DSM 15236 / T118) (Rhodoferax ferrireducens).